The sequence spans 290 residues: Nucleotide-binding protein LAR_0375 (290 aa).

13–20 (GMSGAGKT) is a binding site for ATP. 63-66 (DMRS) contributes to the GTP binding site.

The protein belongs to the RapZ-like family.

Functionally, displays ATPase and GTPase activities. The sequence is that of Nucleotide-binding protein LAR_0375 from Limosilactobacillus reuteri subsp. reuteri (strain JCM 1112) (Lactobacillus reuteri).